The following is a 536-amino-acid chain: Chaperonin GroEL 2 (536 aa).

Residues 29–32 (TLGP), 86–90 (DGTTT), Gly412, and Asp495 each bind ATP.

Belongs to the chaperonin (HSP60) family. As to quaternary structure, forms a cylinder of 14 subunits composed of two heptameric rings stacked back-to-back. Interacts with the co-chaperonin GroES.

Its subcellular location is the cytoplasm. The catalysed reaction is ATP + H2O + a folded polypeptide = ADP + phosphate + an unfolded polypeptide.. Functionally, together with its co-chaperonin GroES, plays an essential role in assisting protein folding. The GroEL-GroES system forms a nano-cage that allows encapsulation of the non-native substrate proteins and provides a physical environment optimized to promote and accelerate protein folding. This Arthrobacter sp. (strain FB24) protein is Chaperonin GroEL 2.